The chain runs to 311 residues: Formimidoylglutamase (311 aa).

Mn(2+) contacts are provided by H130, D155, H157, D159, C242, and D244.

It belongs to the arginase family. The cofactor is Mn(2+).

The enzyme catalyses N-formimidoyl-L-glutamate + H2O = formamide + L-glutamate. It participates in amino-acid degradation; L-histidine degradation into L-glutamate; L-glutamate from N-formimidoyl-L-glutamate (hydrolase route): step 1/1. Functionally, catalyzes the conversion of N-formimidoyl-L-glutamate to L-glutamate and formamide. The sequence is that of Formimidoylglutamase from Staphylococcus aureus (strain MRSA252).